A 724-amino-acid polypeptide reads, in one-letter code: Disks large homolog 4 (724 aa).

S-palmitoyl cysteine attachment occurs at residues Cys3 and Cys5. The disordered stretch occupies residues 15 to 35 (QDEDTPPLEHSPAHLPNQANS). PDZ domains follow at residues 65-151 (EITL…VMRR) and 160-246 (EIKL…VAKP). 2 positions are modified to phosphoserine: Ser73 and Ser142. Tyr240 carries the phosphotyrosine modification. At Ser295 the chain carries Phosphoserine. The PDZ 3 domain maps to 313–393 (RIVIHRGSTG…QTVTIIAQYK (81 aa)). Phosphoserine is present on residues Ser415 and Ser418. Thr420 bears the Phosphothreonine mark. Phosphoserine occurs at positions 422, 425, 449, and 480. Positions 428-498 (KRGFYIRALF…PSKRRVERRE (71 aa)) constitute an SH3 domain. Residues 534 to 709 (ARPIIILGPT…IYHKVKRVIE (176 aa)) form the Guanylate kinase-like domain. Tyr580 is modified (phosphotyrosine). Residues Ser606 and Ser654 each carry the phosphoserine modification. Position 715 is a phosphotyrosine (Tyr715).

It belongs to the MAGUK family. As to quaternary structure, interacts through its PDZ domains with ANO2 and NETO1. Interacts through its first two PDZ domains with GRIN2A, GRIN2B, GRIN2C, GRIN2D. Interacts with ASIC3. Interacts with SEMA4C. Interacts with CXADR. Interacts with KCND2. Interacts with SYNGAP1. Interacts with LRRC4 and LRRC4B. Interacts with ERBB4. Interacts with KCNA1, KCNA2, KCNA3 and KCNA4. Interacts through its first PDZ domain with GRIK2, KCNA4 and CRIPT. Interacts through its second PDZ domain with the PDZ domain of NOS1 or the C-terminus of CAPON. Interacts through its third PDZ domain with NLGN1 and CRIPT, and probably with NLGN2 and NLGN3. Interacts through its guanylate kinase-like domain with KIF13B. Interacts through its guanylate kinase-like domain with DLGAP1/GKAP, DLGAP2, DLGAP3, DLGAP4, MAP1A, BEGAIN and SIPA1L1. Isoform 2 interacts through an L27 domain with HGS/HRS and the first L27 domain of CASK. Interacts with ADR1B and ANKS1B. May interact with HTR2A. Interacts with ADAM22. Interacts with KLHL17 and LGI1. Interacts with FRMPD4 (via C-terminus). Interacts with LRFN1, LRFN2 and LRFN4. Interacts (via N-terminal tandem pair of PDZ domains) with GPER1 (via C-terminus tail motif); the interaction is direct and induces the increase of GPER1 protein levels residing at the plasma membrane surface in a estradiol-independent manner. Interacts (via N-terminus tandem pair of PDZ domains) with NOS1 (via N-terminal domain). Interacts with SHANK3. Interacts with KCNJ4. Interacts with GPR85. Interacts with CACNG2 and MPP2 (via the SH3-Guanylate kinase-like sub-module). Interacts with ADGRB1. Found in a complex with PRR7 and GRIN1. Interacts (via PDZ3 domain and to lesser degree via PDZ2 domain) with PRR7. Component of the postsynaptic hippocampal AMPA-type glutamate receptor (AMPAR) complex, at least composed of pore forming AMPAR subunits GRIA1, GRIA2 and GRIA3 and AMPAR auxiliary proteins SHISA6 and SHISA7. Interacts (via its first two PDZ domains) with SHISA6 and SHISA7 (via PDZ-binding motif); the interaction is direct. Interacts with RPH3A and GRIN2A; this ternary complex regulates NMDA receptor composition at postsynaptic membranes. Interacts with ABR and BCR. Interacts with DGKI (via PDZ-binding motif); controls the localization of DGKI to the synapse. Interacts with C9orf72, SMCR8 and RAB39B. Interacts with ZDHHC5. Interacts with PTEN (via PDZ domain-binding motif); the interaction is induced by NMDA and is required for PTEN location at postsynaptic density. Found in a complex with GRIA1, GRIA2, GRIA3, GRIA4, CACNG8 and CNIH2. Interacts with FAM81A; the interaction facilitates condensate formation via liquid-liquid phase separation. Interacts with ADGRL3. Interacts with SORCS3. Post-translationally, palmitoylated. Palmitoylation is required for targeting to postsynaptic density, plasma membrane and synapses. Palmitoylation by ZDHHC2 occurs when the synaptic activity decreases and induces DLG4 synaptic clustering. Palmitoylation by ZDHHC15 regulates trafficking to the postsynaptic density and function in synaptogenesis. Palmitoylation may play a role in glutamate receptor GRIA1 synapse clustering. Depalmitoylated by ABHD17A and ABHD17B and to a lesser extent by ABHD17C, ABHD12, ABHD13, LYPLA1 and LYPLA2. Undergoes rapid synaptic palmitoylation/depalmitoylation cycles during neuronal development which slow down in mature neurons. Ubiquitinated by MDM2 in response to NMDA receptor activation, leading to proteasome-mediated degradation of DLG4 which is required for AMPA receptor endocytosis. As to expression, brain.

Its subcellular location is the cell membrane. It is found in the postsynaptic density. It localises to the synapse. The protein resides in the cytoplasm. The protein localises to the cell projection. Its subcellular location is the axon. It is found in the dendritic spine. It localises to the dendrite. The protein resides in the presynapse. Functionally, postsynaptic scaffolding protein that plays a critical role in synaptogenesis and synaptic plasticity by providing a platform for the postsynaptic clustering of crucial synaptic proteins. Interacts with the cytoplasmic tail of NMDA receptor subunits and shaker-type potassium channels. Required for synaptic plasticity associated with NMDA receptor signaling. Overexpression or depletion of DLG4 changes the ratio of excitatory to inhibitory synapses in hippocampal neurons. May reduce the amplitude of ASIC3 acid-evoked currents by retaining the channel intracellularly. May regulate the intracellular trafficking of ADR1B. Also regulates AMPA-type glutamate receptor (AMPAR) immobilization at postsynaptic density keeping the channels in an activated state in the presence of glutamate and preventing synaptic depression. Under basal conditions, cooperates with FYN to stabilize palmitoyltransferase ZDHHC5 at the synaptic membrane through FYN-mediated phosphorylation of ZDHHC5 and its subsequent inhibition of association with endocytic proteins. This Homo sapiens (Human) protein is Disks large homolog 4.